Consider the following 1063-residue polypeptide: MASTTPITMEDLQKALETQSRALRAELAAGASQSRRPRPPRQRDSSTTGDDSGRDSGGPRRRRGNRGRGQRRDWSRAPPPPEERQETRSQTPAPKPSRAPPQQPQPPRMQTGRGGSAPRPELGPPTNPFQAAVARGLRPPLHDPDTEAPTEACVTSWLWSEGEGAVFYRVDLHFTNLGTPPLDEDGRWDPALMYNPCGPEPPAHVVRAYNQPAGDVRGVWGKGERTYAEQDFRVGGTRWHRLLRMPVRGLDGDSAPLPPHTTERIETRSARHPWRIRFGAPQAFLAGLLLAAVAVGTARAGLQPRADMAAPPTLPQPPRAHGQHYGHHHHQLPFLGHDGHHGGTLRVGQHHRNASDVLPGHWLQGGWGCYNLSDWHQGTHVCHTKHMDFWCVEHDRPPPATPTPLTTAANSTTAATPATAPAPCHAGLNDSCGGFLSGCGPMRLRHGADTRCGRLICGLSTTAQYPPTRFGCAMRWGLPPWELVVLTARPEDGWTCRGVPAHPGTRCPELVSPMGRATCSPASALWLATANALSLDHALAAFVLLVPWVLIFMVCRRTCRRRGAAAALTAVVLQGYNPPAYGEEAFTYLCTAPGCATQAPVPVRLAGVRFESKIVDGGCFAPWDLEATGACICEIPTDVSCEGLGAWVPTAPCARIWNGTQRACTFWAVNAYSSGGYAQLASYFNPGGSYYKQYHPTACEVEPAFGHSDAACWGFPTDTVMSVFALASYVQHPHKTVRVKFHTETRTVWQLSVAGVSCNVTTEHPFCNTPHGQLEVQVPPDPGDLVEYIMNHTGNQQSRWGLGSPNCHGPDWASPVCQRHSPDCSRLVGATPERPRLRLVDADDPLLRTAPGPGEVWVTPVIGSQARKCGLHIRAGPYGHATVEMPEWIHAHTTSDPWHPPGPLGLKFKTVRPVALPRTLAPPRNVRVTGCYQCGTPALVEGLAPGGGNCHLTVNGEDLGAFPPGKFVTAALLNTPPPYQVSCGGESDRASARVIDPAAQSFTGVVYGTHTTAVSETRQTWAEWAAAHWWQLTLGAICALLLAGLLACCAKCLYYLRGAIAPR.

Residues 1 to 131 form a disordered region; the sequence is MASTTPITME…LGPPTNPFQA (131 aa). The interval 30 to 69 is human C1QBP/SF2P32-binding; the sequence is GASQSRRPRPPRQRDSSTTGDDSGRDSGGPRRRRGNRGRG. At Ser-46 the chain carries Phosphoserine; by host. Over residues 59 to 69 the composition is skewed to basic residues; sequence PRRRRGNRGRG. Basic and acidic residues predominate over residues 70 to 87; it reads QRRDWSRAPPPPEERQET. Residues 93-107 are compositionally biased toward pro residues; the sequence is APKPSRAPPQQPQPP. Residues Cys-153 and Cys-197 are joined by a disulfide bond. The segment at 279-300 is functions as E2 signal peptide; sequence GAPQAFLAGLLLAAVAVGTARA. At 301–534 the chain is on the extracellular side; that stretch reads GLQPRADMAA…LWLATANALS (234 aa). N-linked (GlcNAc...) asparagine; by host glycans are attached at residues Asn-353, Asn-371, Asn-410, and Asn-429. The helical transmembrane segment at 535 to 555 threads the bilayer; that stretch reads LDHALAAFVLLVPWVLIFMVC. Residues 556-582 lie on the Cytoplasmic side of the membrane; sequence RRTCRRRGAAAALTAVVLQGYNPPAYG. The functions as E1 signal peptide stretch occupies residues 563–582; sequence GAAAALTAVVLQGYNPPAYG. Topologically, residues 583–1028 are extracellular; it reads EEAFTYLCTA…QTWAEWAAAH (446 aa). 8 disulfides stabilise this stretch: Cys-590–Cys-595, Cys-619–Cys-824, Cys-641–Cys-653, Cys-699–Cys-712, Cys-758–Cys-767, Cys-807–Cys-817, Cys-931–Cys-934, and Cys-950–Cys-983. The N-linked (GlcNAc...) asparagine; by host glycan is linked to Asn-658. 2 residues coordinate Ca(2+): Asn-670 and Ala-671. 2 residues coordinate Ca(2+): Asp-718 and Thr-719. N-linked (GlcNAc...) asparagine; by host glycosylation is found at Asn-759 and Asn-791. 2 O-linked (GalNAc...) threonine; by host glycosylation sites follow: Thr-1011 and Thr-1012. A helical membrane pass occupies residues 1029–1049; sequence WWQLTLGAICALLLAGLLACC. The Extracellular portion of the chain corresponds to 1050-1063; that stretch reads AKCLYYLRGAIAPR.

In terms of assembly, homodimer; further assembles into homooligomer. Interacts with human C1QBP. Interacts (via N-terminus) with protease/methyltransferase p150. As to quaternary structure, heterodimer with spike glycoprotein E2. Heterodimer with spike glycoprotein E1. Post-translationally, structural polyprotein: Specific enzymatic cleavages in vivo yield mature proteins. Two signal peptidase-mediated cleavages within the polyprotein produce the structural proteins capsid, E2, and E1. The E2 signal peptide remains attached to the C-terminus of the capsid protein after cleavage by the signal peptidase. Another signal peptide at E2 C-terminus directs E1 to the ER, with a similar mechanism. In terms of processing, contains three N-linked oligosaccharides. Capsid is phosphorylated on Ser-46 by host. This phosphorylation negatively regulates capsid protein RNA-binding activity. Dephosphorylated by human PP1A.

The protein localises to the virion. The protein resides in the host cytoplasm. Its subcellular location is the host mitochondrion. It is found in the virion membrane. It localises to the host Golgi apparatus membrane. In terms of biological role, capsid protein interacts with genomic RNA and assembles into icosahedric core particles 65-70 nm in diameter. The resulting nucleocapsid eventually associates with the cytoplasmic domain of E2 at the cell membrane, leading to budding and formation of mature virions from host Golgi membranes. Phosphorylation negatively regulates RNA-binding activity, possibly delaying virion assembly during the viral replication phase. Capsid protein dimerizes and becomes disulfide-linked in the virion. Modulates genomic RNA replication. Modulates subgenomic RNA synthesis by interacting with human C1QBP/SF2P32. Induces both perinuclear clustering of mitochondria and the formation of electron-dense intermitochondrial plaques, both hallmarks of rubella virus infected cells. Induces apoptosis when expressed in transfected cells. Its function is as follows. Responsible for viral attachment to target host cell, by binding to the cell receptor. Its transport to the plasma membrane depends on interaction with E1 protein. The surface glycoproteins display an irregular helical organization and a pseudo-tetrameric inner nucleocapsid arrangement. Class II viral fusion protein. Fusion activity is inactive as long as E1 is bound to E2 in mature virion. After virus attachment to target cell and clathrin-mediated endocytosis, acidification of the endosome would induce dissociation of E1/E2 heterodimer and concomitant trimerization of the E1 subunits. This E1 homotrimer is fusion active, and promotes release of viral nucleocapsid in cytoplasm after endosome and viral membrane fusion. The cytoplasmic tail of spike glycoprotein E1 modulates virus release. The surface glycoproteins display an irregular helical organization and a pseudo-tetrameric inner nucleocapsid arrangement. The sequence is that of Structural polyprotein from Homo sapiens (Human).